A 72-amino-acid chain; its full sequence is U-actitoxin-Aeq5b (72 aa).

Positions 1–20 are cleaved as a signal peptide; that stretch reads MNQVMTIFLVLGVIVYSVES. Cystine bridges form between Cys33-Cys71, Cys37-Cys66, Cys44-Cys59, and Cys50-Cys56.

The protein belongs to the Acrorhagin I family. In terms of tissue distribution, expressed by acrorhagi.

The protein localises to the secreted. Its subcellular location is the nematocyst. Toxin that is lethal to crab. It interacts with divalent metal ions (zinc and nickel) suggesting it may function as a metal ion chelator to regulate metal ion levels or as a metal ion transporter, or that its function is modulated by metal ions. Is not active against any of the voltage-gated potassium and sodium channels tested. In addition, it does not show activity in bacterial and fungal growth inhibitory assays as well as in hemolytic assays. The polypeptide is U-actitoxin-Aeq5b (Actinia equina (Beadlet anemone)).